We begin with the raw amino-acid sequence, 218 residues long: UPF0502 protein CJA_1529 (218 aa).

It belongs to the UPF0502 family.

This is UPF0502 protein CJA_1529 from Cellvibrio japonicus (strain Ueda107) (Pseudomonas fluorescens subsp. cellulosa).